A 163-amino-acid polypeptide reads, in one-letter code: Nucleotide-binding protein YajQ (163 aa).

This sequence belongs to the YajQ family.

Functionally, nucleotide-binding protein. This is Nucleotide-binding protein YajQ from Salmonella paratyphi A (strain ATCC 9150 / SARB42).